We begin with the raw amino-acid sequence, 357 residues long: Probable cinnamyl alcohol dehydrogenase (357 aa).

C47 is a Zn(2+) binding site. NADP(+) is bound at residue S49. H69, E70, C100, C103, C106, C114, and C163 together coordinate Zn(2+). NADP(+) contacts are provided by residues T167, 188–193, 211–216, T251, G275, and 298–300; these read GLGGVG, SSSDKK, and SFI.

Belongs to the zinc-containing alcohol dehydrogenase family. As to quaternary structure, homodimer. Zn(2+) is required as a cofactor.

The catalysed reaction is (E)-cinnamyl alcohol + NADP(+) = (E)-cinnamaldehyde + NADPH + H(+). It catalyses the reaction (E)-coniferol + NADP(+) = (E)-coniferaldehyde + NADPH + H(+). The enzyme catalyses (E)-sinapyl alcohol + NADP(+) = (E)-sinapaldehyde + NADPH + H(+). It carries out the reaction (E)-4-coumaroyl alcohol + NADP(+) = (E)-4-coumaraldehyde + NADPH + H(+). The catalysed reaction is (E)-caffeyl alcohol + NADP(+) = (E)-caffeyl aldehyde + NADPH + H(+). Its pathway is aromatic compound metabolism; phenylpropanoid biosynthesis. Its function is as follows. Involved in lignin biosynthesis. Catalyzes the final step specific for the production of lignin monomers. Catalyzes the NADPH-dependent reduction of coniferaldehyde, 5-hydroxyconiferaldehyde, sinapaldehyde, 4-coumaraldehyde and caffeyl aldehyde to their respective alcohols. In Pinus taeda (Loblolly pine), this protein is Probable cinnamyl alcohol dehydrogenase.